Reading from the N-terminus, the 502-residue chain is Cytochrome P450 71B19 (502 aa).

A helical membrane pass occupies residues 1–21; that stretch reads MAISFLCVFLITFVSLIFFAK. C444 lines the heme pocket.

The protein belongs to the cytochrome P450 family. It depends on heme as a cofactor.

Its subcellular location is the membrane. The sequence is that of Cytochrome P450 71B19 (CYP71B19) from Arabidopsis thaliana (Mouse-ear cress).